Reading from the N-terminus, the 544-residue chain is Membrane protein insertase YidC (544 aa).

Residues 6–26 (NILLIGLLFVSFLLWQQWQAD) form a helical membrane-spanning segment. The tract at residues 34–58 (AAQTQSSIPASTVADSHSSDVPDAD) is disordered. Positions 39–49 (SSIPASTVADS) are enriched in polar residues. 4 helical membrane-spanning segments follow: residues 345-365 (LLMF…LITL), 423-443 (GGCL…WVLL), 460-480 (LSVQ…MFVM), and 503-523 (VIFT…WLVG).

The protein belongs to the OXA1/ALB3/YidC family. Type 1 subfamily. As to quaternary structure, interacts with the Sec translocase complex via SecD. Specifically interacts with transmembrane segments of nascent integral membrane proteins during membrane integration.

It is found in the cell inner membrane. In terms of biological role, required for the insertion and/or proper folding and/or complex formation of integral membrane proteins into the membrane. Involved in integration of membrane proteins that insert both dependently and independently of the Sec translocase complex, as well as at least some lipoproteins. Aids folding of multispanning membrane proteins. This chain is Membrane protein insertase YidC, found in Shewanella halifaxensis (strain HAW-EB4).